The following is a 251-amino-acid chain: MKIDILTLFPEMFAGPFSSSILKRAQERGLVEIGLINIRDFSTNKHHTVDDAPYGGGAGMVMGPEALFGAVEHVARKYGSKPGRVVLMCPQGIPFTQAYAADLAREETIVLVCGHYEGIDERVREALVTDEISIGDYVLTGGELPAMVVVDAVARLVPGVLGEALSVMEESFSNGLLEYPHFTRPREFRGLKVPEVLLSGHHEEIRKWRRRQSLLRTLERRPEMLKQAGLTREDREILKELLASLNELDLS.

Residues Gly-114 and 134–139 contribute to the S-adenosyl-L-methionine site; that span reads IGDYVL.

This sequence belongs to the RNA methyltransferase TrmD family. In terms of assembly, homodimer.

The protein localises to the cytoplasm. It catalyses the reaction guanosine(37) in tRNA + S-adenosyl-L-methionine = N(1)-methylguanosine(37) in tRNA + S-adenosyl-L-homocysteine + H(+). Its function is as follows. Specifically methylates guanosine-37 in various tRNAs. The chain is tRNA (guanine-N(1)-)-methyltransferase from Pelotomaculum thermopropionicum (strain DSM 13744 / JCM 10971 / SI).